A 543-amino-acid polypeptide reads, in one-letter code: Malate synthase (543 aa).

The protein belongs to the malate synthase family. As to quaternary structure, homodimer.

Its subcellular location is the cytoplasm. The catalysed reaction is glyoxylate + acetyl-CoA + H2O = (S)-malate + CoA + H(+). Its pathway is carbohydrate metabolism; glyoxylate cycle; (S)-malate from isocitrate: step 2/2. This is Malate synthase (aceB) from Streptomyces arenae.